The following is a 256-amino-acid chain: Hydroxyacylglutathione hydrolase (256 aa).

Positions 57, 59, 61, 62, 115, 134, and 172 each coordinate Zn(2+).

This sequence belongs to the metallo-beta-lactamase superfamily. Glyoxalase II family. Monomer. Requires Zn(2+) as cofactor.

The enzyme catalyses an S-(2-hydroxyacyl)glutathione + H2O = a 2-hydroxy carboxylate + glutathione + H(+). Its pathway is secondary metabolite metabolism; methylglyoxal degradation; (R)-lactate from methylglyoxal: step 2/2. Functionally, thiolesterase that catalyzes the hydrolysis of S-D-lactoyl-glutathione to form glutathione and D-lactic acid. This Rhizobium meliloti (strain 1021) (Ensifer meliloti) protein is Hydroxyacylglutathione hydrolase.